A 273-amino-acid chain; its full sequence is tRNA (guanine-N(7)-)-methyltransferase (273 aa).

G86, E109, R111, N142, A143, and L162 together coordinate S-adenosyl-L-methionine. Residue D165 is part of the active site. The tract at residues P166–K174 is alphaC helix. Residues T240 and E242 each contribute to the S-adenosyl-L-methionine site. Positions T240 to R248 are alpha6 helix.

Belongs to the class I-like SAM-binding methyltransferase superfamily. TrmB family. Catalytic component of the METTL1-WDR4 complex, composed of mettl1 and wdr4.

The protein localises to the nucleus. The enzyme catalyses guanosine(46) in tRNA + S-adenosyl-L-methionine = N(7)-methylguanosine(46) in tRNA + S-adenosyl-L-homocysteine. The catalysed reaction is a guanosine in mRNA + S-adenosyl-L-methionine = an N(7)-methylguanosine in mRNA + S-adenosyl-L-homocysteine. It catalyses the reaction a guanosine in miRNA + S-adenosyl-L-methionine = an N(7)-methylguanosine in miRNA + S-adenosyl-L-homocysteine. The protein operates within tRNA modification; N(7)-methylguanine-tRNA biosynthesis. In terms of biological role, catalytic component of METTL1-WDR4 methyltransferase complex that mediates the formation of N(7)-methylguanine in a subset of RNA species, such as tRNAs, mRNAs and microRNAs (miRNAs). Catalyzes the formation of N(7)-methylguanine at position 46 (m7G46) in a large subset of tRNAs that contain the 5'-RAGGU-3' motif within the variable loop. M7G46 interacts with C13-G22 in the D-loop to stabilize tRNA tertiary structure and protect tRNAs from decay. Also acts as a methyltransferase for a subset of internal N(7)-methylguanine in mRNAs. Internal N(7)-methylguanine methylation of mRNAs in response to stress promotes their relocalization to stress granules, thereby suppressing their translation. Also methylates a specific subset of miRNAs. This is tRNA (guanine-N(7)-)-methyltransferase (mettl1) from Xenopus laevis (African clawed frog).